The primary structure comprises 334 residues: Cathepsin L2 (334 aa).

An N-terminal signal peptide occupies residues 1–17; it reads MNLSLVLAAFCLGIASA. The propeptide at 18–113 is activation peptide; sequence VPKFDQNLDT…KVFREPLFLD (96 aa). 2 cysteine pairs are disulfide-bonded: C135/C178 and C169/C211. C138 is a catalytic residue. A glycan (N-linked (GlcNAc...) asparagine) is linked at N221. A disulfide bond links C270 and C323. The active site involves H277. A glycan (N-linked (GlcNAc...) asparagine) is linked at N292. N301 is an active-site residue.

It belongs to the peptidase C1 family. As to expression, predominantly expressed in the thymus and testis. Also expressed in corneal epithelium, and to a lesser extent in conjunctival epithelium and skin.

It localises to the lysosome. The catalysed reaction is The recombinant enzyme hydrolyzes proteins (serum albumin, collagen) and synthetic substrates (Z-Phe-Arg-NHMec &gt; Z-Leu-Arg-NHMec &gt; Z-Val-Arg-NHMec).. Inhibited by CST6. In terms of biological role, cysteine protease. May have an important role in corneal physiology. This Homo sapiens (Human) protein is Cathepsin L2 (CTSV).